The primary structure comprises 337 residues: DNA-directed RNA polymerase subunit alpha (337 aa).

The tract at residues 1–233 (MIQKNWQELI…DQLALFINFK (233 aa)) is alpha N-terminal domain (alpha-NTD). An alpha C-terminal domain (alpha-CTD) region spans residues 249 to 337 (FNPALLKKVD…DLAKRYEDQY (89 aa)).

Belongs to the RNA polymerase alpha chain family. Homodimer. The RNAP catalytic core consists of 2 alpha, 1 beta, 1 beta' and 1 omega subunit. When a sigma factor is associated with the core the holoenzyme is formed, which can initiate transcription.

The catalysed reaction is RNA(n) + a ribonucleoside 5'-triphosphate = RNA(n+1) + diphosphate. DNA-dependent RNA polymerase catalyzes the transcription of DNA into RNA using the four ribonucleoside triphosphates as substrates. This chain is DNA-directed RNA polymerase subunit alpha, found in Bartonella henselae (strain ATCC 49882 / DSM 28221 / CCUG 30454 / Houston 1) (Rochalimaea henselae).